Reading from the N-terminus, the 86-residue chain is MHAYVYKSQLKPDTYVYVPRRDDFSALPAPLLTSLGALTFVLDVALDAQRRLAQADPDKVRSDMSERGFYLQVPPSVASLMPRHYD.

The 85-residue stretch at 1-85 folds into the YcgL domain; sequence MHAYVYKSQL…SVASLMPRHY (85 aa).

This is YcgL domain-containing protein Smlt4554 from Stenotrophomonas maltophilia (strain K279a).